The chain runs to 129 residues: uncharacterized protein (129 aa).

The HIT domain maps to 3–109 (IFCKIINGEI…IPRYEGDGEV (107 aa)). The short motif at 94–98 (HVHFH) is the Histidine triad motif element.

This is an uncharacterized protein from Methanocaldococcus jannaschii (strain ATCC 43067 / DSM 2661 / JAL-1 / JCM 10045 / NBRC 100440) (Methanococcus jannaschii).